A 152-amino-acid polypeptide reads, in one-letter code: MKVILLENLRRIGSIGEIIDVKRGFARNFLISNKKALYASKENIAEVEKIKSELSKKDTEKKKEAQKISEQINNKEYEIKKLSTENKELYGSVKPTEISKLILENDKLDIKPSMIQPITEIKSIGKFKVKIILHSEVDSEITINVVTADTIQ.

The protein belongs to the bacterial ribosomal protein bL9 family.

Its function is as follows. Binds to the 23S rRNA. The sequence is that of Large ribosomal subunit protein bL9 from Pelagibacter ubique (strain HTCC1062).